The sequence spans 288 residues: Acetyl-coenzyme A carboxylase carboxyl transferase subunit beta (288 aa).

The CoA carboxyltransferase N-terminal domain maps to 32 to 288 (LFAKCPACKH…LELHTEVENV (257 aa)). Residues Cys-36, Cys-39, Cys-54, and Cys-57 each coordinate Zn(2+). The C4-type zinc finger occupies 36-57 (CPACKHTIYQKDLGKNKVCPNC).

Belongs to the AccD/PCCB family. As to quaternary structure, acetyl-CoA carboxylase is a heterohexamer composed of biotin carboxyl carrier protein (AccB), biotin carboxylase (AccC) and two subunits each of ACCase subunit alpha (AccA) and ACCase subunit beta (AccD). Requires Zn(2+) as cofactor.

The protein localises to the cytoplasm. It catalyses the reaction N(6)-carboxybiotinyl-L-lysyl-[protein] + acetyl-CoA = N(6)-biotinyl-L-lysyl-[protein] + malonyl-CoA. Its pathway is lipid metabolism; malonyl-CoA biosynthesis; malonyl-CoA from acetyl-CoA: step 1/1. Functionally, component of the acetyl coenzyme A carboxylase (ACC) complex. Biotin carboxylase (BC) catalyzes the carboxylation of biotin on its carrier protein (BCCP) and then the CO(2) group is transferred by the transcarboxylase to acetyl-CoA to form malonyl-CoA. In Lactococcus lactis subsp. lactis (strain IL1403) (Streptococcus lactis), this protein is Acetyl-coenzyme A carboxylase carboxyl transferase subunit beta.